The chain runs to 141 residues: ATP synthase epsilon chain (141 aa).

This sequence belongs to the ATPase epsilon chain family. As to quaternary structure, F-type ATPases have 2 components, CF(1) - the catalytic core - and CF(0) - the membrane proton channel. CF(1) has five subunits: alpha(3), beta(3), gamma(1), delta(1), epsilon(1). CF(0) has three main subunits: a, b and c.

The protein localises to the cell inner membrane. Functionally, produces ATP from ADP in the presence of a proton gradient across the membrane. The chain is ATP synthase epsilon chain from Teredinibacter turnerae (strain ATCC 39867 / T7901).